The primary structure comprises 225 residues: UPF0758 protein SZO_09140 (225 aa).

Residues 102–224 (PVLSSAQVAE…YYSFREKSDL (123 aa)) form the MPN domain. Positions 173, 175, and 186 each coordinate Zn(2+). Positions 173 to 186 (HNHPSGLTKPSAND) match the JAMM motif motif.

The protein belongs to the UPF0758 family.

The polypeptide is UPF0758 protein SZO_09140 (Streptococcus equi subsp. zooepidemicus (strain H70)).